The chain runs to 408 residues: Probable acyl-CoA dehydrogenase 6 (408 aa).

The active-site Proton acceptor is the glutamate 265.

Belongs to the acyl-CoA dehydrogenase family. In terms of assembly, homotetramer. It depends on FAD as a cofactor.

The catalysed reaction is 3-methylbutanoyl-CoA + oxidized [electron-transfer flavoprotein] + H(+) = 3-methylbut-2-enoyl-CoA + reduced [electron-transfer flavoprotein]. The protein operates within amino-acid degradation; L-leucine degradation; (S)-3-hydroxy-3-methylglutaryl-CoA from 3-isovaleryl-CoA: step 1/3. In Caenorhabditis elegans, this protein is Probable acyl-CoA dehydrogenase 6 (acdh-6).